The primary structure comprises 119 residues: UPF0102 protein Nther_1376 (119 aa).

This sequence belongs to the UPF0102 family.

This is UPF0102 protein Nther_1376 from Natranaerobius thermophilus (strain ATCC BAA-1301 / DSM 18059 / JW/NM-WN-LF).